A 297-amino-acid polypeptide reads, in one-letter code: MFKSGFVSIVGRPNVGKSTLMNNVVGEKIAIMSDKPQTTRNTIQAVYTDEEMQIVFLDTPGIHKPKNKLGEFMVKAATEAFKNVDLILFVVDDSKKIGPGDRKIIEDLRSVKTPIILVVNKIDQLDQKDELFDIIKMYDREGIFKEIVPISALKGKNTDTLIKVIQNYLEEGPKYFPDYMITDQPERVLIAELIREKVLHYLNDEIPHGVAVEIEKMKARNDKEIVDVSAVIYCERDSHKGIIIGKNGRKLKGIGKSARQDIELLLGSQINLQLWVKVKENWRNLQNYINNFGYNDK.

Positions 3–171 (KSGFVSIVGR…IKVIQNYLEE (169 aa)) constitute an Era-type G domain. Positions 11 to 18 (GRPNVGKS) are G1. 11 to 18 (GRPNVGKS) is a GTP binding site. The segment at 37–41 (QTTRN) is G2. Residues 58–61 (DTPG) are G3. GTP-binding positions include 58-62 (DTPGI) and 120-123 (NKID). Residues 120–123 (NKID) form a G4 region. The interval 150–152 (ISA) is G5. The KH type-2 domain maps to 194-280 (IREKVLHYLN…NLQLWVKVKE (87 aa)).

This sequence belongs to the TRAFAC class TrmE-Era-EngA-EngB-Septin-like GTPase superfamily. Era GTPase family. In terms of assembly, monomer.

It localises to the cytoplasm. Its subcellular location is the cell membrane. Functionally, an essential GTPase that binds both GDP and GTP, with rapid nucleotide exchange. Plays a role in 16S rRNA processing and 30S ribosomal subunit biogenesis and possibly also in cell cycle regulation and energy metabolism. This chain is GTPase Era, found in Clostridioides difficile (strain 630) (Peptoclostridium difficile).